The sequence spans 547 residues: Glucose-6-phosphate isomerase 1 (547 aa).

Glu353 functions as the Proton donor in the catalytic mechanism. Catalysis depends on residues His384 and Lys512.

It belongs to the GPI family.

It localises to the cytoplasm. It catalyses the reaction alpha-D-glucose 6-phosphate = beta-D-fructose 6-phosphate. It functions in the pathway carbohydrate biosynthesis; gluconeogenesis. Its pathway is carbohydrate degradation; glycolysis; D-glyceraldehyde 3-phosphate and glycerone phosphate from D-glucose: step 2/4. Functionally, catalyzes the reversible isomerization of glucose-6-phosphate to fructose-6-phosphate. The polypeptide is Glucose-6-phosphate isomerase 1 (Chromobacterium violaceum (strain ATCC 12472 / DSM 30191 / JCM 1249 / CCUG 213 / NBRC 12614 / NCIMB 9131 / NCTC 9757 / MK)).